Reading from the N-terminus, the 334-residue chain is Spermatogenesis-associated protein 32 (334 aa).

The segment at 24–98 (SDHHRHHHHH…TESPEQQNYR (75 aa)) is disordered. Acidic residues predominate over residues 37-47 (ENEDEDTEVEA). The segment covering 48–60 (ELPRTEPPPKVDP) has biased composition (basic and acidic residues). Polar residues predominate over residues 77–98 (SKTTPETEGDSYTESPEQQNYR). Serine 135 and serine 138 each carry phosphoserine.

As to quaternary structure, interacts with syntaxin-1 and ACTB. As to expression, highly expressed in the testis and weakly in the brain and heart.

In Mus musculus (Mouse), this protein is Spermatogenesis-associated protein 32 (Spata32).